The following is a 183-amino-acid chain: Adenylate kinase (183 aa).

An ATP-binding site is contributed by 12 to 17; that stretch reads GAGKGT. The NMP stretch occupies residues 32–61; sequence STGDLLRSEVAAGSELGKEAEAVMNRGELV. Residues Thr-33, Arg-38, 59–61, 86–89, and Gln-93 contribute to the AMP site; these read ELV and GFPR. The LID stretch occupies residues 127–133; sequence SRGRADD. Position 128 (Arg-128) interacts with ATP. AMP is bound by residues Arg-130 and Arg-141. Gly-169 serves as a coordination point for ATP.

This sequence belongs to the adenylate kinase family. In terms of assembly, monomer.

It is found in the cytoplasm. It carries out the reaction AMP + ATP = 2 ADP. It functions in the pathway purine metabolism; AMP biosynthesis via salvage pathway; AMP from ADP: step 1/1. Functionally, catalyzes the reversible transfer of the terminal phosphate group between ATP and AMP. Plays an important role in cellular energy homeostasis and in adenine nucleotide metabolism. This Synechococcus sp. (strain CC9902) protein is Adenylate kinase.